We begin with the raw amino-acid sequence, 37 residues long: Pi-theraphotoxin-Hm3a (37 aa).

3 cysteine pairs are disulfide-bonded: Cys3-Cys18, Cys10-Cys23, and Cys17-Cys33.

This sequence belongs to the psalmotoxin-1 family. Expressed by the venom gland.

Its subcellular location is the secreted. Its function is as follows. This toxin acts on different isoforms of acid-sensing ion channel ASIC1 in a similar manner to psalmotoxin-1 (AC P60514). On ASIC1a homotrimer, it provokes a pH-dependent inhibition (IC(50)=39.7 nM on human and IC(50)=1.3 nM on rat channels), whereas it potentiates ASIC1b homotrimer and ASIC1a-ASIC1b heterotrimer (EC(50)=178.1 nM on human ASIC1b, EC(50)=46.5 nM on rat ASIC1b and EC(50)=17.4 nM on rat ASIC1a-ASIC1b channels). On rat ASIC1a, it acts by inhibiting channel currents by shifting the pH of half-maximal effect (pH(50)) of steady-state desensitization and activation to more alkaline values. In Heteroscodra maculata (Togo starburst tarantula), this protein is Pi-theraphotoxin-Hm3a.